Consider the following 247-residue polypeptide: Uridylate kinase (247 aa).

Residue 15–18 participates in ATP binding; that stretch reads KLSG. Residues 23–28 form an involved in allosteric activation by GTP region; it reads GEEGFG. Glycine 57 contributes to the UMP binding site. Glycine 58 and arginine 62 together coordinate ATP. Residues aspartate 77 and 138–145 contribute to the UMP site; that span reads TGNPFCTT. 3 residues coordinate ATP: threonine 165, tyrosine 171, and aspartate 174.

Belongs to the UMP kinase family. Homohexamer.

It is found in the cytoplasm. It carries out the reaction UMP + ATP = UDP + ADP. Its pathway is pyrimidine metabolism; CTP biosynthesis via de novo pathway; UDP from UMP (UMPK route): step 1/1. Allosterically activated by GTP. Inhibited by UTP. Functionally, catalyzes the reversible phosphorylation of UMP to UDP. The protein is Uridylate kinase of Shewanella loihica (strain ATCC BAA-1088 / PV-4).